A 569-amino-acid chain; its full sequence is MDSSTATAMTAPFIDPTDHVNLKTDTDASENRRMGNYKPSIWNYDFLQSLATHHNIVEERHLKLAEKLKGQVKFMFGAPMEPLAKLELVDVVQRLGLNHRFETEIKEALFSIYKDESNGWWFGHLHATSLRFRLLRQCGLFIPQDVFKTFQNKTGEFDMKLCDNVKGLLSLYEASYLGWKGENILDEAKAFATKYLKSAWENISEKWLAKRVKHALALPLHWRVPRIEARWFIEAYEQEANMNPTLLKLAKLDFNMVQSIHQKEIGELARWWVTTGLDKLAFARNNLLQSYMWSCAIASDPKFKLARETIVEIGSVLTVVDDAYDVYGSMDELDLYTSSVERWSCVEIDKLPNTLKLIFMSMFNKTNEVGLRVQHERGYNSIPTFIKAWVQQCKSYQKEARWFHGGHTPPLEEYSLNGLVSIGFPLLLITGYVAIAENEAALDKVHPLPDLLHYSSLLSRLINDIGTSPDEMARGDNLKSIHCYMNGTGASEEVAREHIKGVIEENWKILNQCCFDQSQFQEPFITFNLNSVRGSHFFYEFGDGFGVTDSWTKVDMKSVLIDPIPLGEE.

4 residues coordinate (2E)-geranyl diphosphate: arginine 284, aspartate 321, aspartate 325, and arginine 460. Mg(2+)-binding residues include aspartate 321 and aspartate 325. Positions 321–325 match the DDXXD motif motif; it reads DDAYD. Mg(2+) contacts are provided by asparagine 463, threonine 467, and glutamate 471.

Belongs to the terpene synthase family. Tpsb subfamily. Requires Mg(2+) as cofactor. The cofactor is Mn(2+).

It catalyses the reaction (2E,6E)-farnesyl diphosphate = (1S,5S,6R)-alpha-bergamotene + diphosphate. The catalysed reaction is (2E,6E)-farnesyl diphosphate = (+)-alpha-santalene + diphosphate. The enzyme catalyses (2E,6E)-farnesyl diphosphate = (-)-beta-santalene + diphosphate. Its function is as follows. Catalyzes a mixture of sesquiterpenoids from (2E,6E)-farnesyl diphosphate in fragrance biosynthesis. Catalyzes the formation of alpha-santalene, beta-santalene, epi-beta-santalene and exo-alpha-bergamotene, as well as traces of alpha-farnesene and beta-farnesene. This Santalum austrocaledonicum (Sandalwood) protein is Santalene synthase.